Here is a 635-residue protein sequence, read N- to C-terminus: Threonine--tRNA ligase (635 aa).

The region spanning 1–61 (MINISFPDGS…DNDCKFRILT (61 aa)) is the TGS domain. The catalytic stretch occupies residues 242-533 (DHRKLGRELD…LIEEYAGRFP (292 aa)). Residues Cys333, His384, and His510 each contribute to the Zn(2+) site.

Belongs to the class-II aminoacyl-tRNA synthetase family. In terms of assembly, homodimer. Requires Zn(2+) as cofactor.

It is found in the cytoplasm. It carries out the reaction tRNA(Thr) + L-threonine + ATP = L-threonyl-tRNA(Thr) + AMP + diphosphate + H(+). Catalyzes the attachment of threonine to tRNA(Thr) in a two-step reaction: L-threonine is first activated by ATP to form Thr-AMP and then transferred to the acceptor end of tRNA(Thr). Also edits incorrectly charged L-seryl-tRNA(Thr). This is Threonine--tRNA ligase from Rickettsia rickettsii (strain Sheila Smith).